The chain runs to 257 residues: UPF0246 protein YaaA (257 aa).

This sequence belongs to the UPF0246 family.

This Salmonella agona (strain SL483) protein is UPF0246 protein YaaA.